Reading from the N-terminus, the 152-residue chain is Aspartate 1-decarboxylase (152 aa).

Ser24 serves as the catalytic Schiff-base intermediate with substrate; via pyruvic acid. Ser24 bears the Pyruvic acid (Ser) mark. Residue Thr56 coordinates substrate. The active-site Proton donor is the Tyr57. 72 to 74 is a binding site for substrate; that stretch reads GAA.

This sequence belongs to the PanD family. Heterooctamer of four alpha and four beta subunits. It depends on pyruvate as a cofactor. Is synthesized initially as an inactive proenzyme, which is activated by self-cleavage at a specific serine bond to produce a beta-subunit with a hydroxyl group at its C-terminus and an alpha-subunit with a pyruvoyl group at its N-terminus.

Its subcellular location is the cytoplasm. It carries out the reaction L-aspartate + H(+) = beta-alanine + CO2. It participates in cofactor biosynthesis; (R)-pantothenate biosynthesis; beta-alanine from L-aspartate: step 1/1. In terms of biological role, catalyzes the pyruvoyl-dependent decarboxylation of aspartate to produce beta-alanine. The polypeptide is Aspartate 1-decarboxylase (Methylobacterium nodulans (strain LMG 21967 / CNCM I-2342 / ORS 2060)).